A 684-amino-acid chain; its full sequence is Methionine--tRNA ligase (684 aa).

Residues 15 to 25 (PYANGAIHLGH) carry the 'HIGH' region motif. 4 residues coordinate Zn(2+): cysteine 146, cysteine 149, cysteine 159, and cysteine 162. The 'KMSKS' region motif lies at 331–335 (KMSKS). Lysine 334 contributes to the ATP binding site. Positions 582 to 684 (DFAKLDLRVA…SGVTAGMQVR (103 aa)) constitute a tRNA-binding domain.

The protein belongs to the class-I aminoacyl-tRNA synthetase family. MetG type 1 subfamily. As to quaternary structure, homodimer. The cofactor is Zn(2+).

Its subcellular location is the cytoplasm. The catalysed reaction is tRNA(Met) + L-methionine + ATP = L-methionyl-tRNA(Met) + AMP + diphosphate. Is required not only for elongation of protein synthesis but also for the initiation of all mRNA translation through initiator tRNA(fMet) aminoacylation. This is Methionine--tRNA ligase from Glaesserella parasuis serovar 5 (strain SH0165) (Haemophilus parasuis).